The primary structure comprises 470 residues: Glutamate--tRNA ligase 2 (470 aa).

Residues 11–21 (PSPTGHLHLGG) carry the 'HIGH' region motif. Residues 238–242 (KLSKR) carry the 'KMSKS' region motif. Residue Lys241 participates in ATP binding.

Belongs to the class-I aminoacyl-tRNA synthetase family. Glutamate--tRNA ligase type 1 subfamily. As to quaternary structure, monomer.

It is found in the cytoplasm. It carries out the reaction tRNA(Glu) + L-glutamate + ATP = L-glutamyl-tRNA(Glu) + AMP + diphosphate. Catalyzes the attachment of glutamate to tRNA(Glu) in a two-step reaction: glutamate is first activated by ATP to form Glu-AMP and then transferred to the acceptor end of tRNA(Glu). The sequence is that of Glutamate--tRNA ligase 2 from Ehrlichia ruminantium (strain Gardel).